The chain runs to 88 residues: Alkene monooxygenase system, oxygenase component subunit gamma (88 aa).

Belongs to the TmoB/XamoB family. The alkene monooxygenase multicomponent enzyme system is composed of an electron transfer component and a monooxygenase component interacting with the effector protein XamoD. The electron transfer component is composed of a ferredoxin reductase (XamoF) and a ferredoxin (XamoC), and the monooxygenase component is formed by a heterohexamer (dimer of heterotrimers) of two alpha subunits (XamoA), two beta subunits (XamoE) and two gamma subunits (XamoB).

The protein localises to the cytoplasm. It carries out the reaction propene + NADH + O2 + H(+) = 1,2-epoxypropane + NAD(+) + H2O. Its activity is regulated as follows. Inhibited by propyne. In terms of biological role, component of the alkene monooxygenase multicomponent enzyme system which catalyzes the O2- and NADH-dependent epoxidation of short chain (C2 to C6) alkenes to their corresponding epoxides. Also able to catalyze the oxidation of a number of chlorinated alkenes, including trichloroethylene, cis- and trans-1,2-dichloroethylene, vinyl chloride, 1-chloropropylene, 1,3-dichloropropylene and 2,3-dichloropropylene. The protein is Alkene monooxygenase system, oxygenase component subunit gamma of Xanthobacter autotrophicus (strain ATCC BAA-1158 / Py2).